The following is a 311-amino-acid chain: Protoheme IX farnesyltransferase (311 aa).

9 helical membrane-spanning segments follow: residues Val-32–Asn-52, Pro-53–Leu-73, Phe-104–Trp-124, Phe-125–Leu-145, Ile-153–Gly-173, Phe-180–Phe-200, Lys-224–Gly-244, Leu-245–Ala-265, and Phe-285–Val-305.

The protein belongs to the UbiA prenyltransferase family. Protoheme IX farnesyltransferase subfamily.

It is found in the cell inner membrane. It catalyses the reaction heme b + (2E,6E)-farnesyl diphosphate + H2O = Fe(II)-heme o + diphosphate. It participates in porphyrin-containing compound metabolism; heme O biosynthesis; heme O from protoheme: step 1/1. Its function is as follows. Converts heme B (protoheme IX) to heme O by substitution of the vinyl group on carbon 2 of heme B porphyrin ring with a hydroxyethyl farnesyl side group. This is Protoheme IX farnesyltransferase from Bartonella tribocorum (strain CIP 105476 / IBS 506).